A 1396-amino-acid chain; its full sequence is DNA-directed RNA polymerase subunit beta (1396 aa).

This sequence belongs to the RNA polymerase beta chain family. In terms of assembly, the RNAP catalytic core consists of 2 alpha, 1 beta, 1 beta' and 1 omega subunit. When a sigma factor is associated with the core the holoenzyme is formed, which can initiate transcription.

The enzyme catalyses RNA(n) + a ribonucleoside 5'-triphosphate = RNA(n+1) + diphosphate. DNA-dependent RNA polymerase catalyzes the transcription of DNA into RNA using the four ribonucleoside triphosphates as substrates. The chain is DNA-directed RNA polymerase subunit beta from Erythrobacter litoralis (strain HTCC2594).